A 428-amino-acid chain; its full sequence is Enolase (428 aa).

Residue glutamine 164 participates in (2R)-2-phosphoglycerate binding. Glutamate 208 (proton donor) is an active-site residue. Aspartate 245, glutamate 286, and aspartate 313 together coordinate Mg(2+). 4 residues coordinate (2R)-2-phosphoglycerate: lysine 338, arginine 367, serine 368, and lysine 389. Lysine 338 functions as the Proton acceptor in the catalytic mechanism.

It belongs to the enolase family. Mg(2+) is required as a cofactor.

Its subcellular location is the cytoplasm. The protein resides in the secreted. The protein localises to the cell surface. It carries out the reaction (2R)-2-phosphoglycerate = phosphoenolpyruvate + H2O. Its pathway is carbohydrate degradation; glycolysis; pyruvate from D-glyceraldehyde 3-phosphate: step 4/5. In terms of biological role, catalyzes the reversible conversion of 2-phosphoglycerate (2-PG) into phosphoenolpyruvate (PEP). It is essential for the degradation of carbohydrates via glycolysis. The protein is Enolase of Pyrococcus abyssi (strain GE5 / Orsay).